Reading from the N-terminus, the 69-residue chain is Small ribosomal subunit protein bS21 (69 aa).

The protein belongs to the bacterial ribosomal protein bS21 family.

This is Small ribosomal subunit protein bS21 from Borrelia duttonii (strain Ly).